The primary structure comprises 255 residues: Diphthine synthase (255 aa).

S-adenosyl-L-methionine is bound by residues Leu9, Asp85, Val88, 113–114 (SI), Leu164, Ala207, and His232.

The protein belongs to the diphthine synthase family. As to quaternary structure, homodimer.

It carries out the reaction 2-[(3S)-amino-3-carboxypropyl]-L-histidyl-[translation elongation factor 2] + 3 S-adenosyl-L-methionine = diphthine-[translation elongation factor 2] + 3 S-adenosyl-L-homocysteine + 3 H(+). It functions in the pathway protein modification; peptidyl-diphthamide biosynthesis. In terms of biological role, S-adenosyl-L-methionine-dependent methyltransferase that catalyzes the trimethylation of the amino group of the modified target histidine residue in translation elongation factor 2 (EF-2), to form an intermediate called diphthine. The three successive methylation reactions represent the second step of diphthamide biosynthesis. In Methanococcus vannielii (strain ATCC 35089 / DSM 1224 / JCM 13029 / OCM 148 / SB), this protein is Diphthine synthase.